We begin with the raw amino-acid sequence, 523 residues long: Glycerate kinase (523 aa).

Ser-60 is modified (phosphoserine). At Lys-200 the chain carries N6-acetyllysine.

This sequence belongs to the glycerate kinase type-2 family. Expressed in the hippocampus, callus, brain, cerebellum, renal cortex interstitial cells, epithelium of interlobular bile duct and skeletal muscle.

It is found in the cytoplasm. The catalysed reaction is (R)-glycerate + ATP = (2R)-3-phosphoglycerate + ADP + H(+). This is Glycerate kinase (Glyctk) from Mus musculus (Mouse).